A 264-amino-acid chain; its full sequence is Cell division protein FtsQ (264 aa).

The interval Met-1–Trp-24 is disordered. The Cytoplasmic segment spans residues Met-1 to Arg-31. A helical membrane pass occupies residues Ala-32 to Tyr-52. Topologically, residues Gly-53 to Ser-264 are extracellular. Positions Leu-57–Arg-126 constitute a POTRA domain.

Belongs to the FtsQ/DivIB family. FtsQ subfamily.

The protein resides in the cell membrane. In terms of biological role, essential cell division protein. This Streptomyces collinus protein is Cell division protein FtsQ.